We begin with the raw amino-acid sequence, 184 residues long: ATP synthase subunit b, chloroplastic (184 aa).

A helical transmembrane segment spans residues 27–49; the sequence is LATNLINLSVVLGVLIFFGKGVL.

Belongs to the ATPase B chain family. As to quaternary structure, F-type ATPases have 2 components, F(1) - the catalytic core - and F(0) - the membrane proton channel. F(1) has five subunits: alpha(3), beta(3), gamma(1), delta(1), epsilon(1). F(0) has four main subunits: a(1), b(1), b'(1) and c(10-14). The alpha and beta chains form an alternating ring which encloses part of the gamma chain. F(1) is attached to F(0) by a central stalk formed by the gamma and epsilon chains, while a peripheral stalk is formed by the delta, b and b' chains.

The protein resides in the plastid. Its subcellular location is the chloroplast thylakoid membrane. Functionally, f(1)F(0) ATP synthase produces ATP from ADP in the presence of a proton or sodium gradient. F-type ATPases consist of two structural domains, F(1) containing the extramembraneous catalytic core and F(0) containing the membrane proton channel, linked together by a central stalk and a peripheral stalk. During catalysis, ATP synthesis in the catalytic domain of F(1) is coupled via a rotary mechanism of the central stalk subunits to proton translocation. Its function is as follows. Component of the F(0) channel, it forms part of the peripheral stalk, linking F(1) to F(0). This Nymphaea alba (White water-lily) protein is ATP synthase subunit b, chloroplastic.